Reading from the N-terminus, the 81-residue chain is High-potential iron-sulfur protein (81 aa).

[4Fe-4S] cluster-binding residues include C43, C46, C59, and C73.

The protein belongs to the high-potential iron-sulfur protein (HiPIP) family. Homodimer.

In terms of biological role, specific class of high-redox-potential 4Fe-4S ferredoxins. Functions in anaerobic electron transport in most purple and in some other photosynthetic bacteria and in at least one genus (Paracoccus) of halophilic, denitrifying bacteria. The polypeptide is High-potential iron-sulfur protein (hip) (Thiococcus pfennigii (Thiocapsa pfennigii)).